Consider the following 408-residue polypeptide: Imidazolonepropionase (408 aa).

Histidine 73 and histidine 75 together coordinate Fe(3+). The Zn(2+) site is built by histidine 73 and histidine 75. The 4-imidazolone-5-propanoate site is built by arginine 82, tyrosine 145, and histidine 178. Tyrosine 145 contributes to the N-formimidoyl-L-glutamate binding site. Residue histidine 243 participates in Fe(3+) binding. Histidine 243 lines the Zn(2+) pocket. Glutamine 246 lines the 4-imidazolone-5-propanoate pocket. A Fe(3+)-binding site is contributed by aspartate 318. A Zn(2+)-binding site is contributed by aspartate 318. N-formimidoyl-L-glutamate is bound by residues asparagine 320 and glycine 322. Serine 323 is a 4-imidazolone-5-propanoate binding site.

The protein belongs to the metallo-dependent hydrolases superfamily. HutI family. Zn(2+) is required as a cofactor. Fe(3+) serves as cofactor.

The protein localises to the cytoplasm. The catalysed reaction is 4-imidazolone-5-propanoate + H2O = N-formimidoyl-L-glutamate. The protein operates within amino-acid degradation; L-histidine degradation into L-glutamate; N-formimidoyl-L-glutamate from L-histidine: step 3/3. Its function is as follows. Catalyzes the hydrolytic cleavage of the carbon-nitrogen bond in imidazolone-5-propanoate to yield N-formimidoyl-L-glutamate. It is the third step in the universal histidine degradation pathway. This chain is Imidazolonepropionase, found in Shewanella halifaxensis (strain HAW-EB4).